The sequence spans 318 residues: Ribose-phosphate pyrophosphokinase (318 aa).

ATP contacts are provided by residues 40-42 (DGE) and 99-100 (RQ). Mg(2+) contacts are provided by His-134 and Asp-173. The active site involves Lys-196. D-ribose 5-phosphate-binding positions include Arg-198, Asp-222, and 226 to 230 (DTAGT).

It belongs to the ribose-phosphate pyrophosphokinase family. Class I subfamily. As to quaternary structure, homohexamer. Requires Mg(2+) as cofactor.

Its subcellular location is the cytoplasm. It carries out the reaction D-ribose 5-phosphate + ATP = 5-phospho-alpha-D-ribose 1-diphosphate + AMP + H(+). The protein operates within metabolic intermediate biosynthesis; 5-phospho-alpha-D-ribose 1-diphosphate biosynthesis; 5-phospho-alpha-D-ribose 1-diphosphate from D-ribose 5-phosphate (route I): step 1/1. Functionally, involved in the biosynthesis of the central metabolite phospho-alpha-D-ribosyl-1-pyrophosphate (PRPP) via the transfer of pyrophosphoryl group from ATP to 1-hydroxyl of ribose-5-phosphate (Rib-5-P). The chain is Ribose-phosphate pyrophosphokinase from Burkholderia pseudomallei (strain K96243).